The following is a 212-amino-acid chain: Cytidylate kinase (212 aa).

7–15 contacts ATP; the sequence is GPAASGKGT.

This sequence belongs to the cytidylate kinase family. Type 1 subfamily.

Its subcellular location is the cytoplasm. The enzyme catalyses CMP + ATP = CDP + ADP. The catalysed reaction is dCMP + ATP = dCDP + ADP. In Bradyrhizobium sp. (strain ORS 278), this protein is Cytidylate kinase.